An 85-amino-acid chain; its full sequence is MAHKKAGGSTRNGRDSESKRLGVKCFGGELVNAGGIIVRQRGTRFHPGANVGCGRDHTLFALTTGKIQFEVKGPKNRKFVSIVAE.

It belongs to the bacterial ribosomal protein bL27 family.

The chain is Large ribosomal subunit protein bL27 from Sodalis glossinidius (strain morsitans).